The chain runs to 637 residues: MSNWSIKDAYVGYNVNYWSSGLYGISEAGEVTVSPDPNHPEHTIGLNELAKDMVKSGVALPVLVRFPQILHHRVNSLCNAFNQAITRYDYQSDYLLVYPIKVNQQQTVVEEILASQVSKEVPQLGLEAGSKPELMAVLAMAQKASSVIICNGYKDVEYIRLALIGEKLGHQVYIVLEKLSELKVVLEEAKKLGVTPRLGLRVRLAFQGKGKWQASGGEKSKFGLSAAQVLNVINSLKDEDMLDSLQLLHFHLGSQIANIRDIRSGVSEAGRFYCELQKMGANVKCFDVGGGLAVDYDGTRSQSSNSMNYGLTEYANNIVSVLNDMCREHDQPMPRLISESGRYLTAHHAVLITDVIGTEAYKPEDLQAPDEEAPQQLKNMWDSWGEVSGRADQRALIEIYHDVQSDLAEVHSLFALGQMSLSDRAWAEQMNLRVCYELKGVMSGKYRFHRPVIDELNEKLADKFFVNFSLFQSLPDAWGIDQVFPVMPLSGLDKKPERRAVMLDITCDSDGTVDQYVDGQGIETTLPVPAWSAESPYLIGFFLVGAYQEILGDMHNLFGDTNSAVVRLDDDGLVNIESVLAGDTVADVLRYVNLDAVSFMRTYEELVNLHIQEDERANILEELQIGLKGYTYLEDFS.

Position 101 is an N6-(pyridoxal phosphate)lysine (Lys-101). 286–296 (FDVGGGLAVDY) contacts substrate.

It belongs to the Orn/Lys/Arg decarboxylase class-II family. SpeA subfamily. Requires Mg(2+) as cofactor. The cofactor is pyridoxal 5'-phosphate.

It carries out the reaction L-arginine + H(+) = agmatine + CO2. Its pathway is amine and polyamine biosynthesis; agmatine biosynthesis; agmatine from L-arginine: step 1/1. Catalyzes the biosynthesis of agmatine from arginine. The protein is Biosynthetic arginine decarboxylase of Shewanella loihica (strain ATCC BAA-1088 / PV-4).